The following is a 450-amino-acid chain: Nicotinamide phosphoribosyltransferase (450 aa).

Arg-210 lines the diphosphate pocket. Asp-233 provides a ligand contact to beta-nicotinamide D-ribonucleotide. The diphosphate site is built by His-249 and Arg-310. Residues 310–312 (RAD), 364–365 (GD), and Arg-403 each bind beta-nicotinamide D-ribonucleotide.

Belongs to the NAPRTase family.

The enzyme catalyses beta-nicotinamide D-ribonucleotide + diphosphate = 5-phospho-alpha-D-ribose 1-diphosphate + nicotinamide + H(+). The protein operates within cofactor biosynthesis; NAD(+) biosynthesis; nicotinamide D-ribonucleotide from 5-phospho-alpha-D-ribose 1-diphosphate and nicotinamide: step 1/1. Functionally, catalyzes the condensation of nicotinamide with 5-phosphoribosyl-1-pyrophosphate to yield nicotinamide mononucleotide, an intermediate in the biosynthesis of NAD. This is Nicotinamide phosphoribosyltransferase from Mycoplasma genitalium (strain ATCC 33530 / DSM 19775 / NCTC 10195 / G37) (Mycoplasmoides genitalium).